The sequence spans 99 residues: PE family protein PE13 (99 aa).

One can recognise a PE domain in the interval 1–93 (MSFVMAYPEM…ASSYAATEVA (93 aa)).

This sequence belongs to the mycobacterial PE family.

The protein localises to the secreted. The protein resides in the cell wall. May play a pivotal role in the interaction between M.tuberculosis and host. Can enhance the survival within macrophages under stress conditions such as H(2)O(2), SDS and low pH. Increases the production of IL-6 and IL-1beta from macrophages, and decreases the secretion of suppressor of cytokine signaling 3 (SOCS-3). These changes probably involve the p38-ERK-NF-kappa-B signaling pathway. Also precipitates the macrophage death. This is PE family protein PE13 from Mycobacterium tuberculosis (strain ATCC 25618 / H37Rv).